The following is a 407-amino-acid chain: Peptidase T (407 aa).

His78 contacts Zn(2+). Residue Asp80 is part of the active site. Residue Asp141 participates in Zn(2+) binding. The Proton acceptor role is filled by Glu175. Residues Glu176, Asp198, and His380 each coordinate Zn(2+).

Belongs to the peptidase M20B family. Zn(2+) serves as cofactor.

The protein resides in the cytoplasm. The enzyme catalyses Release of the N-terminal residue from a tripeptide.. Its function is as follows. Cleaves the N-terminal amino acid of tripeptides. The chain is Peptidase T from Clostridium novyi (strain NT).